Consider the following 294-residue polypeptide: Non-selective voltage-gated ion channel VDAC2 (294 aa).

A2 carries the N-acetylalanine modification. Residues K23 and K31 each contribute to the ATP site. An N6-acetyllysine; alternate modification is found at K31. An N6-succinyllysine; alternate modification is found at K31. K31 participates in a covalent cross-link: Glycyl lysine isopeptide (Lys-Gly) (interchain with G-Cter in ubiquitin); alternate. 2 beta stranded membrane-spanning segments follow: residues 37-46 (LVKLDVKTKS) and 50-58 (VEFSTSGSS). K64 is covalently cross-linked (Glycyl lysine isopeptide (Lys-Gly) (interchain with G-Cter in ubiquitin)). Residues 65 to 75 (VTGTLETKYKW) form a beta stranded membrane-spanning segment. The residue at position 78 (Y78) is a Phosphotyrosine. The next 3 beta stranded transmembrane spans lie at 80–87 (LTFTEKWN), 91–100 (TLGTEIAIED), and 106–115 (LKLTFDTTFS). T118 is modified (phosphothreonine). At K120 the chain carries N6-acetyllysine; alternate. Residue K120 forms a Glycyl lysine isopeptide (Lys-Gly) (interchain with G-Cter in ubiquitin); alternate linkage. K121 is covalently cross-linked (Glycyl lysine isopeptide (Lys-Gly) (interchain with G-Cter in ubiquitin)). 4 beta stranded membrane-spanning segments follow: residues 122–131 (SGKIKSSYKR), 134–141 (VNLGCDVD), 148–156 (AIHGSAVFG), and 161–169 (LAGYQMTFD). Residue K172 forms a Glycyl lysine isopeptide (Lys-Gly) (interchain with G-Cter in ubiquitin) linkage. The next 6 beta stranded transmembrane spans lie at 174–186 (KLTRNNFAVGYRT), 189–196 (FQLHTNVN), 200–209 (EFGGSIYQKV), 213–222 (LDTSVNLAWT), 229–238 (RFGIAAKYQL), and 242–249 (ASISAKVN). Position 251 is a phosphoserine (S251). NAD(+)-binding positions include 253–255 (LIG) and 271–275 (SALVD). Beta stranded transmembrane passes span 253-262 (LIGVGYTQTL) and 265-274 (GVKLTLSALV). N6-acetyllysine; alternate is present on K277. A Glycyl lysine isopeptide (Lys-Gly) (interchain with G-Cter in ubiquitin); alternate cross-link involves residue K277. Residues 284–293 (HKLGLALELE) form a beta stranded membrane-spanning segment.

Belongs to the eukaryotic mitochondrial porin family. Monomer, homodimer and higher order oligomers; formation of higher order structures is necessary for scramblase activity. Interacts with ARMC12 in a TBC1D21-dependent manner. Interacts with KLC3. Interacts with SPATA33. Interacts with PPP3CC in a SPATA33-dependent manner. In terms of processing, ubiquitinated by PRKN during mitophagy, leading to its degradation and enhancement of mitophagy. Deubiquitinated by USP30.

The protein resides in the mitochondrion outer membrane. Its subcellular location is the membrane. The enzyme catalyses chloride(in) = chloride(out). The catalysed reaction is K(+)(in) = K(+)(out). It carries out the reaction a 1,2-diacyl-sn-glycero-3-phospho-L-serine(in) = a 1,2-diacyl-sn-glycero-3-phospho-L-serine(out). It catalyses the reaction a 1,2-diacyl-sn-glycero-3-phosphocholine(in) = a 1,2-diacyl-sn-glycero-3-phosphocholine(out). The enzyme catalyses a 1,2-diacyl-sn-glycero-3-phospho-(1D-myo-inositol)(in) = a 1,2-diacyl-sn-glycero-3-phospho-(1D-myo-inositol)(out). Non-selective voltage-gated ion channel that mediates the transport of anions and cations through the mitochondrion outer membrane and plasma membrane. The channel adopts an open conformation at zero mV and a closed conformation at both positive and negative potentials. There are two populations of channels; the main that functions in a lower open-state conductance with lower ion selectivity, that switch, in a voltage-dependent manner, from the open to a low-conducting 'closed' state and the other that has a normal ion selectivity in the typical high conductance, 'open' state. Binds various lipids, including the sphingolipid ceramide, the phospholipid phosphatidylcholine, and the sterols cholesterol and oxysterol. Binding of ceramide promotes the mitochondrial outer membrane permeabilization (MOMP) apoptotic pathway. Functionally, catalyzes the scrambling of phospholipids across the outer mitochondrial membrane; the mechanism is unrelated to channel activity and is capable of translocating both anionic and zwitterionic phospholipids. The protein is Non-selective voltage-gated ion channel VDAC2 of Sus scrofa (Pig).